The sequence spans 235 residues: Ribosomal RNA small subunit methyltransferase G (235 aa).

Residues G74, F79, 97-99 (EAT), 125-126 (AE), and R144 each bind S-adenosyl-L-methionine.

This sequence belongs to the methyltransferase superfamily. RNA methyltransferase RsmG family.

It localises to the cytoplasm. Functionally, specifically methylates the N7 position of a guanine in 16S rRNA. The protein is Ribosomal RNA small subunit methyltransferase G of Dehalococcoides mccartyi (strain CBDB1).